A 143-amino-acid polypeptide reads, in one-letter code: Submaxillary gland androgen-regulated protein 2, isoform gamma (143 aa).

Residues 1–22 form the signal peptide; the sequence is MKALYMVFVLWVLIGCFLSSEC. Residues 28–50 are disordered; it reads GQHDPTRPLSPSNPSSHFYPQPD. Positions 36–45 are enriched in polar residues; it reads LSPSNPSSHF.

The protein localises to the secreted. In terms of biological role, may play a role in protection or detoxification. This is Submaxillary gland androgen-regulated protein 2, isoform gamma (Smr2) from Mus musculus (Mouse).